A 219-amino-acid chain; its full sequence is uncharacterized protein (219 aa).

The helical transmembrane segment at 13–32 (VFGLFLFSLIFFGLLSLATF) threads the bilayer.

It is found in the membrane. This is an uncharacterized protein from Aquifex aeolicus (strain VF5).